The primary structure comprises 1192 residues: Plakophilin-4 (1192 aa).

Positions 1 to 31 (MPAPEQASLVEEGQPQTRQEAASTGPGMEPE) are disordered. A coiled-coil region spans residues 36 to 70 (TILASVKEQELQFQRLTRELEVERQIVASQLERCR). Positions 73-262 (AESPSIASTS…PRPLNPSAYS (190 aa)) are disordered. Ser-75 carries the phosphoserine modification. Positions 77-86 (SIASTSSTEK) are enriched in polar residues. Position 84 is a phosphothreonine (Thr-84). Phosphoserine is present on residues Ser-106, Ser-132, Ser-136, and Ser-139. Polar residues-rich tracts occupy residues 138 to 156 (GSLG…SDSG), 163 to 204 (FHNS…QPSV), and 214 to 230 (SVPS…STGV). Phosphoserine occurs at positions 221, 231, and 236. The span at 231 to 242 (SPSRGSLRTSLG) shows a compositional bias: low complexity. 2 positions are modified to omega-N-methylarginine: Arg-254 and Arg-270. 2 positions are modified to phosphoserine: Ser-273 and Ser-281. The disordered stretch occupies residues 290-310 (SVTSRQTSNPNGPTPQYQTTA). Ser-314, Ser-327, and Ser-337 each carry phosphoserine. The interval 323 to 348 (TRVASPSQGQVGSSSPKRSGMTAVPQ) is disordered. A compositionally biased stretch (low complexity) spans 325–338 (VASPSQGQVGSSSP). Tyr-372 is modified (phosphotyrosine). Residues Ser-392, Ser-403, and Ser-406 each carry the phosphoserine modification. A Phosphothreonine modification is found at Thr-412. The residue at position 415 (Tyr-415) is a Phosphotyrosine. The stretch at 415–455 (YEGRTYYSPVYRSPNHGTVELQGSQTALYRTGSVGIGNLQR) is one ARM 1 repeat. Residues Ser-422, Ser-427, and Ser-438 each carry the phosphoserine modification. Residue Tyr-478 is modified to Phosphotyrosine. Phosphoserine is present on residues Ser-510, Ser-512, and Ser-515. 5 ARM repeats span residues 518–557 (KDPR…HLCF), 560–599 (NKVK…NLVF), 604–644 (DENK…NLSS), 660–702 (LTNT…NLSS), and 706–751 (EARK…NLSY). The segment covering 773 to 782 (GKESPSKDSE) has biased composition (basic and acidic residues). Positions 773 to 810 (GKESPSKDSEPSCWGKKKKKKKRTPQEDQWDGVGPIPG) are disordered. Ser-776 carries the phosphoserine modification. ARM repeat units lie at residues 815–855 (PKGV…NLSA), 862–901 (AYIR…NMAL), and 950–993 (MENA…TLWQ). Residues Thr-1013 and Thr-1017 each carry the phosphothreonine modification. Residue Ser-1045 is modified to Phosphoserine. Residues 1058 to 1086 (PRSEYDRTQPPMQYYNSQGDATHKGLYPG) are disordered. Residues 1067 to 1077 (PPMQYYNSQGD) are compositionally biased toward polar residues. Ser-1091, Ser-1100, and Ser-1135 each carry phosphoserine.

It belongs to the beta-catenin family. As to quaternary structure, interacts with PDZD2. Interacts (via the C-terminus) with FRMPD2 (via the PDZ 2 domain). Interacts with RHOA; the interaction is detected at the midbody. Interacts with ECT2; the interaction is detected at the midbody. Interacts with CCDC85B. As to expression, expressed in salivary glands (at protein level). Expressed in arrector pili muscle (at protein level).

It is found in the cell junction. It localises to the desmosome. Its subcellular location is the cytoplasm. The protein localises to the cytoskeleton. The protein resides in the spindle. It is found in the midbody. It localises to the cell membrane. Its function is as follows. Plays a role as a regulator of Rho activity during cytokinesis. May play a role in junctional plaques. This chain is Plakophilin-4 (PKP4), found in Homo sapiens (Human).